Consider the following 201-residue polypeptide: Small ribosomal subunit protein uS4 (201 aa).

Residues 91–151 (SRLDNVVYRA…EKSQKMNWFE (61 aa)) form the S4 RNA-binding domain.

Belongs to the universal ribosomal protein uS4 family. Part of the 30S ribosomal subunit. Contacts protein S5. The interaction surface between S4 and S5 is involved in control of translational fidelity.

In terms of biological role, one of the primary rRNA binding proteins, it binds directly to 16S rRNA where it nucleates assembly of the body of the 30S subunit. With S5 and S12 plays an important role in translational accuracy. This is Small ribosomal subunit protein uS4 from Corynebacterium glutamicum (strain ATCC 13032 / DSM 20300 / JCM 1318 / BCRC 11384 / CCUG 27702 / LMG 3730 / NBRC 12168 / NCIMB 10025 / NRRL B-2784 / 534).